Consider the following 217-residue polypeptide: Enoyl-CoA-hydratase (217 aa).

Belongs to the enoyl-CoA hydratase/isomerase family.

It catalyses the reaction a (3S)-3-hydroxyacyl-CoA = a (2E)-enoyl-CoA + H2O. It carries out the reaction a 4-saturated-(3S)-3-hydroxyacyl-CoA = a (3E)-enoyl-CoA + H2O. It participates in antibiotic biosynthesis; vancomycin biosynthesis. Functionally, involved in the biosynthesis of the nonproteinogenic amino acid monomer (S)-3,5-dihydroxyphenylglycine (Dpg) responsible of the production of vancomycin and teicoplanin antibiotics. Catalyzes the syn-addition of a water molecule across the double bond of a trans-2-enoyl-CoA thioester, resulting in the formation of a beta-hydroxyacyl-CoA thioester. Physiologically, DpgB could act as a dehydratase, facilitating the aromatization of the DPA-S-DgpA or DPA-S-CoA intermediate. The chain is Enoyl-CoA-hydratase (dpgB) from Amycolatopsis orientalis (Nocardia orientalis).